The sequence spans 102 residues: Large ribosomal subunit protein uL24 (102 aa).

The interval 1–22 (MHVKKGDTVQVMSGKDKGKQGV) is disordered.

Belongs to the universal ribosomal protein uL24 family. As to quaternary structure, part of the 50S ribosomal subunit.

In terms of biological role, one of two assembly initiator proteins, it binds directly to the 5'-end of the 23S rRNA, where it nucleates assembly of the 50S subunit. One of the proteins that surrounds the polypeptide exit tunnel on the outside of the subunit. The polypeptide is Large ribosomal subunit protein uL24 (Exiguobacterium sp. (strain ATCC BAA-1283 / AT1b)).